The sequence spans 469 residues: Glutamate--tRNA ligase 1 (469 aa).

The short motif at 8–18 is the 'HIGH' region element; sequence PSPTGYLHIGG. The tract at residues 117-137 is disordered; that stretch reads TPRYDGTWRPEPGKELPPVPA. The short motif at 240 to 244 is the 'KMSKS' region element; the sequence is KLSKR. K243 lines the ATP pocket.

This sequence belongs to the class-I aminoacyl-tRNA synthetase family. Glutamate--tRNA ligase type 1 subfamily. As to quaternary structure, monomer.

Its subcellular location is the cytoplasm. The catalysed reaction is tRNA(Glu) + L-glutamate + ATP = L-glutamyl-tRNA(Glu) + AMP + diphosphate. Its function is as follows. Catalyzes the attachment of glutamate to tRNA(Glu) in a two-step reaction: glutamate is first activated by ATP to form Glu-AMP and then transferred to the acceptor end of tRNA(Glu). This is Glutamate--tRNA ligase 1 from Aliarcobacter butzleri (strain RM4018) (Arcobacter butzleri).